The sequence spans 183 residues: MAMPMPMPPPGPGGDAPPAPTMMPGMAMPMTTGMSFTWGHRAVVLFPRWPGDRAGVGMYFLCLLLVLALAALAEALSAASRRLDLDLDLSRSRGRRRRRRQQLLAAGVHAARMGLAYLVMLAVMSFNAGVLLAAVAGHAAGFLLARSGLLGSRAAAPEIDGAAAAAAATSNGSSLHPSSEPKP.

A disordered region spans residues 1–21 (MAMPMPMPPPGPGGDAPPAPT). 2 helical membrane passes run 56-76 (VGMY…AEAL) and 115-135 (LAYL…LAAV).

The protein belongs to the copper transporter (Ctr) (TC 1.A.56) family. SLC31A subfamily.

Its subcellular location is the membrane. Involved in the transport of copper. This chain is Copper transporter 4 (COPT4), found in Oryza sativa subsp. japonica (Rice).